We begin with the raw amino-acid sequence, 263 residues long: (E)-2-((N-methylformamido)methylene)succinate hydrolase (263 aa).

The active-site Nucleophile is the Ser-96. Active-site residues include Asn-120 and His-241.

This sequence belongs to the AB hydrolase superfamily. As to quaternary structure, monomer.

The catalysed reaction is (E)-2-((N-methylformamido) methylene)succinate + 2 H2O + H(+) = succinate semialdehyde + methylamine + formate + CO2. Involved in the degradation of the pyridine ring of trigonelline (TG; N-methylnicotinate) into succinate and methylamine as carbon and nitrogen sources, respectively. Catalyzes the hydrolysis of (E)-2-((N-methylformamido)methylene)succinate (MFMS) into formic acid, succinate semialdehyde (SSA), methylamine and carbon dioxide. The protein is (E)-2-((N-methylformamido)methylene)succinate hydrolase of Acinetobacter baylyi (strain ATCC 33305 / BD413 / ADP1).